A 547-amino-acid chain; its full sequence is Chaperonin GroEL (547 aa).

Residues 30-33 (TLGP), K51, 87-91 (DGTTT), G415, and D496 each bind ATP. Residues 525–547 (KPEPKSPAGGPGMGGMGGMDGMM) form a disordered region. Positions 533–547 (GGPGMGGMGGMDGMM) are enriched in gly residues.

The protein belongs to the chaperonin (HSP60) family. As to quaternary structure, forms a cylinder of 14 subunits composed of two heptameric rings stacked back-to-back. Interacts with the co-chaperonin GroES.

The protein resides in the cytoplasm. It catalyses the reaction ATP + H2O + a folded polypeptide = ADP + phosphate + an unfolded polypeptide.. Together with its co-chaperonin GroES, plays an essential role in assisting protein folding. The GroEL-GroES system forms a nano-cage that allows encapsulation of the non-native substrate proteins and provides a physical environment optimized to promote and accelerate protein folding. This Cereibacter sphaeroides (strain ATCC 17029 / ATH 2.4.9) (Rhodobacter sphaeroides) protein is Chaperonin GroEL.